The chain runs to 193 residues: UPF0301 protein Fphi_1754 (193 aa).

Belongs to the UPF0301 (AlgH) family.

In Francisella philomiragia subsp. philomiragia (strain ATCC 25017 / CCUG 19701 / FSC 153 / O#319-036), this protein is UPF0301 protein Fphi_1754.